Reading from the N-terminus, the 256-residue chain is Protein US2 homolog (256 aa).

3 disordered regions span residues Thr100–Pro120, Ser167–Pro186, and Val236–Ser256. Over residues Ser167–Arg180 the composition is skewed to low complexity. Residues Asn245–Ser256 are compositionally biased toward basic and acidic residues.

It belongs to the herpesviridae US2 family.

The sequence is that of Protein US2 homolog (28K) from Sus scrofa (Pig).